The following is a 989-amino-acid chain: MPEPSISDLSFTSFVTNDDNLFEETFNFYTKLGFHATRSYVKDNRSDFELTGISTDSIKEIWLESFPLSEVVEASGGRELRKPLQESVGYESEALLGYSPYQSGGVVIKLRLSNHDLEKNNDLPGEVTFFTASIDKLKAKLIEIGAEIIPSKIDLVEFSTRDPMGDVISFSSYPSLNSKKITSPDFFLHPKKEVRSEESIVEQVKSEEGKKKIAIITSGGDAPGMNAAVRAVTRAGIFYGCKVYACYEGYTGLVKGGDMLKELQWQDVRGLLSIGGTIIGTARCKEFRERWGRLQACYNMVSNGIDALVVCGGDGSLTGADLFRKEWPELIKELLGEDKITKEQYETHRNLTIVGLVGSIDNDMCGTDSTIGAYSSLERIIELVDYIDATAASHSRAFVVEVMGRHCGWLGLMSGIATGADYIFIPERPPSESNWKDDLKKVCLRHREKGRRKTTVIVAEGAIDDQLNPITSEEVKDVLVEIGLDTRITRLGHVQRGGAPCAFDRFLATVQGVDAVRAVLESTPAIPSPVISILENKIVRQPLVESVAQTKTVSAAIEAKDFDKALQLRDQEFATSYENFLSVSKYDDGSYLVPESSRLNIAIIHVGAPTSALNPATRVATLNSLAKGHRVFAIRNGFAGLIRHGAVRELNWIDVEDWHNTGGSEIGTNRSLPSDDMGTVAYYFQQYKFDGLIIIGGFEAFTALYELDAARAQYPIFNIPMCCLPATVSNNVPGTEYSLGSDTCLNTLSGYCDAVKQSASASRRRTFVVEVQGGYSGYLASYAGLITGALAVYTPENPINLQTVQEDIELLTRTYEEDDGKNRSGKIFIHNEKASKVYTTDLIAAIIGEAGKGRFESRTAVPGHVQQGKSPSSIDRVNACRLAIKCCNFIEDANFQVKHNANLSADERHLRFFYDDGVKTSAVSGKSSVIDDNTSVVIGIQGSEVTFTPVKQLWENETHHKWRKGKNVHWEQLNIVSDLLSGRLSIRTT.

Positions 1–585 (MPEPSISDLS…SYENFLSVSK (585 aa)) are N-terminal catalytic PFK domain 1. ATP is bound by residues Gly-220, 283 to 284 (RC), and 313 to 316 (GDGS). Asp-314 lines the Mg(2+) pocket. Beta-D-fructose 6-phosphate-binding positions include 359 to 361 (SID), Arg-396, 403 to 405 (MGR), Glu-460, Arg-487, and 493 to 496 (HVQR). Asp-361 serves as the catalytic Proton acceptor. Residues 586–599 (YDDGSYLVPESSRL) form an interdomain linker region. Residues 600-989 (NIAIIHVGAP…LSGRLSIRTT (390 aa)) form a C-terminal regulatory PFK domain 2 region. Residues Arg-670, 727–731 (TVSNN), Arg-765, 772–774 (QGG), Glu-832, Arg-858, 864–867 (HVQQ), and Arg-963 contribute to the beta-D-fructose 2,6-bisphosphate site.

The protein belongs to the phosphofructokinase type A (PFKA) family. ATP-dependent PFK group I subfamily. Eukaryotic two domain clade 'E' sub-subfamily. As to quaternary structure, heterododecamer of 4 alpha, 4 beta and 4 gamma chains. Mg(2+) serves as cofactor.

Its subcellular location is the cytoplasm. It carries out the reaction beta-D-fructose 6-phosphate + ATP = beta-D-fructose 1,6-bisphosphate + ADP + H(+). The protein operates within carbohydrate degradation; glycolysis; D-glyceraldehyde 3-phosphate and glycerone phosphate from D-glucose: step 3/4. Its activity is regulated as follows. Allosterically activated by ADP, AMP, or fructose 2,6-bisphosphate, and allosterically inhibited by ATP or citrate. Catalyzes the phosphorylation of D-fructose 6-phosphate to fructose 1,6-bisphosphate by ATP, the first committing step of glycolysis. The sequence is that of ATP-dependent 6-phosphofructokinase subunit alpha (PFK1) from Komagataella pastoris (Yeast).